Here is a 279-residue protein sequence, read N- to C-terminus: Probable endonuclease 4 (279 aa).

Zn(2+) contacts are provided by H69, H109, E145, D179, H182, H216, D229, H231, and E261.

This sequence belongs to the AP endonuclease 2 family. Requires Zn(2+) as cofactor.

It carries out the reaction Endonucleolytic cleavage to 5'-phosphooligonucleotide end-products.. In terms of biological role, endonuclease IV plays a role in DNA repair. It cleaves phosphodiester bonds at apurinic or apyrimidinic (AP) sites, generating a 3'-hydroxyl group and a 5'-terminal sugar phosphate. The sequence is that of Probable endonuclease 4 from Tolumonas auensis (strain DSM 9187 / NBRC 110442 / TA 4).